A 543-amino-acid polypeptide reads, in one-letter code: Zinc finger protein 280B (543 aa).

The residue at position 1 (methionine 1) is an N-acetylmethionine. Positions 1 to 10 (MEQSCEEEKE) are enriched in acidic residues. Residues 1–23 (MEQSCEEEKEPEPQKNIQETKQV) are disordered. 2 positions are modified to phosphoserine: serine 68 and serine 70. The tract at residues 105–138 (SQLESRSTDSPIIIEPLSKPDYRNSSPQVVPNNS) is disordered. A compositionally biased stretch (low complexity) spans 128-138 (NSSPQVVPNNS). Residues lysine 173, lysine 247, and lysine 261 each participate in a glycyl lysine isopeptide (Lys-Gly) (interchain with G-Cter in SUMO2) cross-link. 4 consecutive C2H2-type zinc fingers follow at residues 343–366 (TTCQ…ENVH), 373–396 (TVCK…KDHH), 432–454 (LLCP…YRGH), and 460–483 (HQCS…TQCH). Residues 518 to 543 (ASITVSTSDSEPSLPRSKSKISKKSH) form a disordered region. Over residues 534–543 (SKSKISKKSH) the composition is skewed to basic residues.

Its subcellular location is the nucleus. In terms of biological role, may function as a transcription factor. This chain is Zinc finger protein 280B (ZNF280B), found in Homo sapiens (Human).